The primary structure comprises 312 residues: Olfactory receptor 52A1 (312 aa).

The Extracellular segment spans residues 1–27; sequence MSISNITVYMPSVLTLVGIPGLESVQC. N-linked (GlcNAc...) asparagine glycosylation is present at N5. A helical transmembrane segment spans residues 28–48; the sequence is WIGIPFCAIYLIAMIGNSLLL. Residues 49–56 are Cytoplasmic-facing; that stretch reads SIIKSERS. The helical transmembrane segment at 57–77 threads the bilayer; it reads LHEPLYIFLGMLGATDIALAS. At 78–101 the chain is on the extracellular side; the sequence is SIMPKMLGIFWFNVPEIYFDSCLL. A disulfide bridge links C99 with C182. The chain crosses the membrane as a helical span at residues 102–122; the sequence is QMWFIHTLQGIESGILVAMAL. Over 123-141 the chain is Cytoplasmic; it reads DRYVAICYPLRHANIFTHQ. The chain crosses the membrane as a helical span at residues 142–162; that stretch reads LVIQIGTMVVLRAAILVAPCL. Residues 163-199 lie on the Extracellular side of the membrane; the sequence is VLIKCRFQFYHTTVISHSYCEHMAIVKLAAANVQVNK. Residues 200–220 form a helical membrane-spanning segment; it reads IYGLFVAFTVAGFDLTFITLS. Topologically, residues 221 to 240 are cytoplasmic; that stretch reads YIQIFITVFRLPQKEARFKA. The helical transmembrane segment at 241 to 261 threads the bilayer; sequence FNTCIAHICVFLQFYLLAFFS. Residues 262 to 276 are Extracellular-facing; that stretch reads FFTHRFGSHISPYIH. A helical transmembrane segment spans residues 277–297; it reads ILFSSIYLLVPPFLNPLVYGA. At 298–312 the chain is on the cytoplasmic side; the sequence is KTTQIRIHVVKMFCS.

This sequence belongs to the G-protein coupled receptor 1 family.

The protein localises to the cell membrane. In terms of biological role, odorant receptor. This is Olfactory receptor 52A1 (OR52A1) from Homo sapiens (Human).